A 230-amino-acid polypeptide reads, in one-letter code: Phosphoribosylformylglycinamidine synthase subunit PurQ (230 aa).

The Glutamine amidotransferase type-1 domain maps to 2 to 226 (RVAVIVFPGS…LKTWREQNSV (225 aa)). The Nucleophile role is filled by Cys86. Active-site residues include His195 and Glu197.

As to quaternary structure, part of the FGAM synthase complex composed of 1 PurL, 1 PurQ and 2 PurS subunits.

It is found in the cytoplasm. It catalyses the reaction N(2)-formyl-N(1)-(5-phospho-beta-D-ribosyl)glycinamide + L-glutamine + ATP + H2O = 2-formamido-N(1)-(5-O-phospho-beta-D-ribosyl)acetamidine + L-glutamate + ADP + phosphate + H(+). It carries out the reaction L-glutamine + H2O = L-glutamate + NH4(+). The protein operates within purine metabolism; IMP biosynthesis via de novo pathway; 5-amino-1-(5-phospho-D-ribosyl)imidazole from N(2)-formyl-N(1)-(5-phospho-D-ribosyl)glycinamide: step 1/2. Part of the phosphoribosylformylglycinamidine synthase complex involved in the purines biosynthetic pathway. Catalyzes the ATP-dependent conversion of formylglycinamide ribonucleotide (FGAR) and glutamine to yield formylglycinamidine ribonucleotide (FGAM) and glutamate. The FGAM synthase complex is composed of three subunits. PurQ produces an ammonia molecule by converting glutamine to glutamate. PurL transfers the ammonia molecule to FGAR to form FGAM in an ATP-dependent manner. PurS interacts with PurQ and PurL and is thought to assist in the transfer of the ammonia molecule from PurQ to PurL. This is Phosphoribosylformylglycinamidine synthase subunit PurQ from Brevibacillus brevis (strain 47 / JCM 6285 / NBRC 100599).